The primary structure comprises 121 residues: SMYQLWKMILQETGKNAVPSYGLYGCNCGVGSRGKPKDATDRCCFVHKCCYKKLTDCSPKTDSYSYSWKDKTIVCGDNNPCLQEMCECDKAVAICLRENLDTYNKNYKIYPKPLCKKADAC.

7 disulfides stabilise this stretch: Cys-26–Cys-115, Cys-28–Cys-44, Cys-43–Cys-95, Cys-49–Cys-121, Cys-50–Cys-88, Cys-57–Cys-81, and Cys-75–Cys-86. Residues 105 to 117 (KNYKIYPKPLCKK) form an important for membrane-damaging activities in eukaryotes and bacteria; heparin-binding region.

Belongs to the phospholipase A2 family. Group II subfamily. K49 sub-subfamily. As to quaternary structure, monomer. As to expression, expressed by the venom gland.

The protein resides in the secreted. In terms of biological role, snake venom phospholipase A2 homolog that lacks enzymatic activity but shows high myotoxic activities. In vivo, induces a mild edema when subcutaneously injected into mice foot pad. The polypeptide is Basic phospholipase A2 homolog GodMT-II (Cerrophidion godmani (Porthidium godmani)).